Reading from the N-terminus, the 147-residue chain is SsrA-binding protein (147 aa).

The protein belongs to the SmpB family.

It localises to the cytoplasm. Its function is as follows. Required for rescue of stalled ribosomes mediated by trans-translation. Binds to transfer-messenger RNA (tmRNA), required for stable association of tmRNA with ribosomes. tmRNA and SmpB together mimic tRNA shape, replacing the anticodon stem-loop with SmpB. tmRNA is encoded by the ssrA gene; the 2 termini fold to resemble tRNA(Ala) and it encodes a 'tag peptide', a short internal open reading frame. During trans-translation Ala-aminoacylated tmRNA acts like a tRNA, entering the A-site of stalled ribosomes, displacing the stalled mRNA. The ribosome then switches to translate the ORF on the tmRNA; the nascent peptide is terminated with the 'tag peptide' encoded by the tmRNA and targeted for degradation. The ribosome is freed to recommence translation, which seems to be the essential function of trans-translation. This is SsrA-binding protein from Thermosipho melanesiensis (strain DSM 12029 / CIP 104789 / BI429).